The primary structure comprises 189 residues: Movement protein (189 aa).

The protein belongs to the tombusvirus/aureusvirus movement protein p22 family. In terms of assembly, interacts with host protein HFI22. In terms of processing, phosphorylated.

The protein localises to the host membrane. In terms of biological role, transports viral genome to neighboring plant cells directly through plasmosdesmata, without any budding. The movement protein allows efficient cell to cell propagation, by bypassing the host cell wall barrier. This chain is Movement protein, found in Capsicum annuum (Capsicum pepper).